Here is a 739-residue protein sequence, read N- to C-terminus: Alcohol dehydrogenase (quinone), dehydrogenase subunit (739 aa).

Positions 1-35 (MISAVFGKRRSLSRTLTAGTICAALISGYATMASA) are cleaved as a signal peptide. Glutamate 97 provides a ligand contact to pyrroloquinoline quinone. A disulfide bridge links cysteine 143 with cysteine 144. Residue arginine 149 coordinates pyrroloquinoline quinone. Residue glutamate 217 participates in Ca(2+) binding. Threonine 279 lines the pyrroloquinoline quinone pocket. Ca(2+) contacts are provided by asparagine 299 and aspartate 344. Aspartate 344 functions as the Proton acceptor in the catalytic mechanism. Residues lysine 371 and isoleucine 585 each contribute to the pyrroloquinoline quinone site. The Cytochrome c domain occupies 635-739 (FDSKRTDNGY…NADGIPEQLP (105 aa)). Residues cysteine 651, cysteine 654, histidine 655, and methionine 694 each contribute to the heme c site.

The protein belongs to the bacterial PQQ dehydrogenase family. In terms of assembly, the alcohol dehydrogenase multicomponent enzyme system is composed of a dehydrogenase subunit I (AdhA) and a cytochrome c subunit II (AdhB). Pyrroloquinoline quinone serves as cofactor. It depends on Ca(2+) as a cofactor. Requires heme c as cofactor.

It localises to the cell membrane. The catalysed reaction is ethanol + a ubiquinone = a ubiquinol + acetaldehyde. Its function is as follows. Dehydrogenase component of the alcohol dehydrogenase multicomponent enzyme system which is involved in the production of acetic acid and in the ethanol oxidase respiratory chain. Quinohemoprotein alcohol dehydrogenase (ADH) catalyzes the oxidation of ethanol to acetaldehyde by transferring electrons to the ubiquinone embedded in the membrane phospholipids. The electrons transfer from ethanol to membranous ubiquinone occurs from pyrroloquinoline quinone (PQQ) to one heme c in subunit I (AdhA), and finally to two heme c in subunit II (AdhB). Besides ubiquinone reduction, ADH also has a ubiquinol (QH2) oxidation reaction which mediates electron transfer from ubiquinol to the non-energy generating bypass oxidase system. The electrons transfer occurs from ubiquinol (QH2) to the additional heme c within subunit II (AdhB). In Komagataeibacter europaeus (Gluconacetobacter europaeus), this protein is Alcohol dehydrogenase (quinone), dehydrogenase subunit.